Here is a 140-residue protein sequence, read N- to C-terminus: Class I hydrophobin 1 (140 aa).

Residues 1–18 (MKFAAVVVLAAAAAAVSA) form the signal peptide. Residues 22 to 60 (AQRMARGLPPKAPIRRHGTPADTEKRSHPSSTGGGQCNT) are disordered. 4 cysteine pairs are disulfide-bonded: cysteine 58/cysteine 119, cysteine 65/cysteine 113, cysteine 66/cysteine 99, and cysteine 120/cysteine 133.

Belongs to the fungal hydrophobin family. As to quaternary structure, self-assembles to form functional amyloid fibrils called rodlets. Self-assembly into fibrillar rodlets occurs spontaneously at hydrophobic:hydrophilic interfaces and the rodlets further associate laterally to form amphipathic monolayers.

It is found in the secreted. It localises to the cell wall. Aerial growth, conidiation, and dispersal of filamentous fungi in the environment rely upon a capability of their secreting small amphipathic proteins called hydrophobins (HPBs) with low sequence identity. Class I can self-assemble into an outermost layer of rodlet bundles on aerial cell surfaces, conferring cellular hydrophobicity that supports fungal growth, development and dispersal; whereas Class II form highly ordered films at water-air interfaces through intermolecular interactions but contribute nothing to the rodlet structure. The polypeptide is Class I hydrophobin 1 (Pisolithus tinctorius (Dead man's foot)).